We begin with the raw amino-acid sequence, 134 residues long: Large ribosomal subunit protein uL16c (134 aa).

Residues 1–17 (MLSPKRTRFRKQHRGRM) show a composition bias toward basic residues. The disordered stretch occupies residues 1-22 (MLSPKRTRFRKQHRGRMKGISS).

The protein belongs to the universal ribosomal protein uL16 family. In terms of assembly, part of the 50S ribosomal subunit.

The protein localises to the plastid. Its subcellular location is the chloroplast. The protein is Large ribosomal subunit protein uL16c of Solanum tuberosum (Potato).